The following is a 56-amino-acid chain: RLSRRRVYSIGGRRRRRRRRSRGRRGRRRGRRRGRRRGRRRGRRRRRRRGGRRRRR.

Residues Arg-1–Arg-56 form a disordered region.

Post-translationally, P2 is phosphorylated in immature sperm. It is dephosphorylated in mature sperm allowing a stronger interaction with DNA. As to expression, testis.

Its subcellular location is the nucleus. It localises to the chromosome. Its function is as follows. Protamines substitute for histones in the chromatin of sperm during the haploid phase of spermatogenesis. They compact sperm DNA into a highly condensed, stable and inactive complex. Functionally, octopus spermiogenesis is characterized by a double nuclear protein transition: Histones are first replaced by P1, which allows the chromatin to adopt a shape that is not as relaxed as with histones. The majority of P1 is later replaced by P2, forming a compact chromatin. P2 is the main protamine of sperm. The polypeptide is Sperm protamine P1 (Octopus vulgaris (Common octopus)).